The following is a 131-amino-acid chain: QRFP-like peptide (131 aa).

A signal peptide spans 1 to 25; that stretch reads MGVRVMRSRICVIGLLVLMLTQSEA. Residues 26–94 constitute a propeptide that is removed on maturation; sequence YSFREKSWRT…DDGISPADKR (69 aa). A disordered region spans residues 48–131; it reads RRDGGDQAPS…RESRRSFGSD (84 aa). Polar residues predominate over residues 97-106; it reads MLQQLAQQLK. Residue phenylalanine 119 is modified to Phenylalanine amide. The span at 120-131 shows a compositional bias: basic and acidic residues; the sequence is GKRESRRSFGSD. Residues 123–131 constitute a propeptide that is removed on maturation; sequence ESRRSFGSD.

The protein belongs to the RFamide neuropeptide family.

Its subcellular location is the secreted. Functionally, ligand for the G-protein coupled receptor QRFPR. This is QRFP-like peptide from Branchiostoma floridae (Florida lancelet).